We begin with the raw amino-acid sequence, 268 residues long: 3-deoxy-manno-octulosonate cytidylyltransferase (268 aa).

This sequence belongs to the KdsB family.

It is found in the cytoplasm. It carries out the reaction 3-deoxy-alpha-D-manno-oct-2-ulosonate + CTP = CMP-3-deoxy-beta-D-manno-octulosonate + diphosphate. Its pathway is nucleotide-sugar biosynthesis; CMP-3-deoxy-D-manno-octulosonate biosynthesis; CMP-3-deoxy-D-manno-octulosonate from 3-deoxy-D-manno-octulosonate and CTP: step 1/1. It participates in bacterial outer membrane biogenesis; lipopolysaccharide biosynthesis. Its function is as follows. Activates KDO (a required 8-carbon sugar) for incorporation into bacterial lipopolysaccharide in Gram-negative bacteria. The sequence is that of 3-deoxy-manno-octulosonate cytidylyltransferase from Ralstonia nicotianae (strain ATCC BAA-1114 / GMI1000) (Ralstonia solanacearum).